The sequence spans 470 residues: uncharacterized protein (470 aa).

An N-terminal signal peptide occupies residues 1 to 24; the sequence is MKKLVGSLAAISVLSATGFSYVGY.

This is an uncharacterized protein from Mycoplasma capricolum subsp. capricolum (strain California kid / ATCC 27343 / NCTC 10154).